Consider the following 305-residue polypeptide: Energy-coupling factor transporter ATP-binding protein EcfA2 (305 aa).

An ABC transporter domain is found at 13 to 262; it reads LQNVDITFTN…KNLLQELLIE (250 aa). 55-62 serves as a coordination point for ATP; that stretch reads GSTGSGKS.

Belongs to the ABC transporter superfamily. Energy-coupling factor EcfA family. In terms of assembly, forms a stable energy-coupling factor (ECF) transporter complex composed of 2 membrane-embedded substrate-binding proteins (S component), 2 ATP-binding proteins (A component) and 2 transmembrane proteins (T component).

Its subcellular location is the cell membrane. ATP-binding (A) component of a common energy-coupling factor (ECF) ABC-transporter complex. Unlike classic ABC transporters this ECF transporter provides the energy necessary to transport a number of different substrates. The polypeptide is Energy-coupling factor transporter ATP-binding protein EcfA2 (Spiroplasma kunkelii).